A 240-amino-acid polypeptide reads, in one-letter code: Protein unc-119 homolog A (240 aa).

Residues 1 to 12 show a composition bias toward gly residues; sequence MKVKKGGGGTGP. The disordered stretch occupies residues 1 to 62; it reads MKVKKGGGGT…PLQGKQPIGP (62 aa). Ser37, Ser39, and Ser41 each carry phosphoserine; by CK2. Position 131 (Tyr131) interacts with tetradecanoate.

The protein belongs to the PDE6D/unc-119 family. Interacts with CABP4; in the absence of calcium. May interact with GTP-bound ARL1. Interacts with ARL2 and ARL3 (GTP-bound forms); this promotes the release of myristoylated cargo proteins. Found in a complex with ARL3, RP2 and UNC119; RP2 induces hydrolysis of GTP ARL3 in the complex, leading to the release of UNC119. Interacts with NPHP3 (when myristoylated). Interacts with CYS1 (when myristoylated). Interacts with MACIR; interaction only takes place when UNC119 is not liganded with myristoylated proteins. Interacts with ARL1 and ARL3 GTP-bound forms. Interacts with ARL2. Interacts with ARL2. Interacts with LCK; this interaction plays a crucial role in activation of LCK. Interacts with FYN. Interacts with RAB11A; in a cell cycle-dependent manner. Interacts with LYN (via SH2 and SH3 domains); leading to LYN activation. Interacts with DNM1; leading to a decrease of DNM1 GTPase activity. Found in a complex with ABL1, ABL2, CRK and UNC119; leading to the inhibition of CRK phosphorylation by ABL kinases. Interacts with CD44. Interacts with KLHL18 (via kelch repeats). Interacts with PPP3CA, PPP3CB and PPP3CC. Interacts with USP48; this interaction promotes UNC119 stability. Phosphorylation suppresses its interaction with KLHL18 and down-regulates its KLHL18-mediated degradation. Phosphorylated more under light conditions than dark conditions. Dephosphorylated by calcineurin.

Its subcellular location is the cytoplasm. It localises to the cytoskeleton. The protein resides in the microtubule organizing center. It is found in the centrosome. The protein localises to the spindle. Its subcellular location is the spindle pole. In terms of biological role, involved in synaptic functions in photoreceptor cells, the signal transduction in immune cells as a Src family kinase activator, endosome recycling, the uptake of bacteria and endocytosis, protein trafficking in sensory neurons and as lipid-binding chaperone with specificity for a diverse subset of myristoylated proteins. Specifically binds the myristoyl moiety of a subset of N-terminally myristoylated proteins and is required for their localization. Binds myristoylated GNAT1 and is required for G-protein localization and trafficking in sensory neurons. Probably plays a role in trafficking proteins in photoreceptor cells. Plays important roles in mediating Src family kinase signals for the completion of cytokinesis via RAB11A. The protein is Protein unc-119 homolog A (Unc119) of Rattus norvegicus (Rat).